A 127-amino-acid polypeptide reads, in one-letter code: Large ribosomal subunit protein bL12 (127 aa).

It belongs to the bacterial ribosomal protein bL12 family. As to quaternary structure, homodimer. Part of the ribosomal stalk of the 50S ribosomal subunit. Forms a multimeric L10(L12)X complex, where L10 forms an elongated spine to which 2 to 4 L12 dimers bind in a sequential fashion. Binds GTP-bound translation factors.

Forms part of the ribosomal stalk which helps the ribosome interact with GTP-bound translation factors. Is thus essential for accurate translation. This chain is Large ribosomal subunit protein bL12, found in Streptomyces avermitilis (strain ATCC 31267 / DSM 46492 / JCM 5070 / NBRC 14893 / NCIMB 12804 / NRRL 8165 / MA-4680).